We begin with the raw amino-acid sequence, 517 residues long: GMP synthase [glutamine-hydrolyzing] (517 aa).

The 191-residue stretch at Arg9 to Leu199 folds into the Glutamine amidotransferase type-1 domain. Cys86 (nucleophile) is an active-site residue. Residues His173 and Glu175 contribute to the active site. The region spanning Trp200–Arg392 is the GMPS ATP-PPase domain. Residue Ser227–Ser233 participates in ATP binding.

Homodimer.

The enzyme catalyses XMP + L-glutamine + ATP + H2O = GMP + L-glutamate + AMP + diphosphate + 2 H(+). It functions in the pathway purine metabolism; GMP biosynthesis; GMP from XMP (L-Gln route): step 1/1. Catalyzes the synthesis of GMP from XMP. This is GMP synthase [glutamine-hydrolyzing] from Vibrio campbellii (strain ATCC BAA-1116).